A 111-amino-acid polypeptide reads, in one-letter code: MSEHVRTRSQSSERGNDQESSQPVGSVIVQEPTEEKRQEEEPPTDNQGIAPSGEIENEGAPAVQGPDMEAFQQELALLKIEDEPGDGPDVREGIMPTFDLTKVLEAGDAQP.

The interval 1-67 is disordered; that stretch reads MSEHVRTRSQ…EGAPAVQGPD (67 aa). A compositionally biased stretch (polar residues) spans 8 to 24; sequence RSQSSERGNDQESSQPV. The residue at position 97 (T97) is a Phosphothreonine.

It belongs to the GAGE family.

The polypeptide is Putative G antigen family E member 3 (PAGE2B) (Homo sapiens (Human)).